Reading from the N-terminus, the 277-residue chain is Hydroxyethylthiazole kinase (277 aa).

Position 56 (Met56) interacts with substrate. ATP contacts are provided by Arg131 and Thr177. Residue Ala204 coordinates substrate.

Belongs to the Thz kinase family. Mg(2+) is required as a cofactor.

The catalysed reaction is 5-(2-hydroxyethyl)-4-methylthiazole + ATP = 4-methyl-5-(2-phosphooxyethyl)-thiazole + ADP + H(+). It participates in cofactor biosynthesis; thiamine diphosphate biosynthesis; 4-methyl-5-(2-phosphoethyl)-thiazole from 5-(2-hydroxyethyl)-4-methylthiazole: step 1/1. Catalyzes the phosphorylation of the hydroxyl group of 4-methyl-5-beta-hydroxyethylthiazole (THZ). The chain is Hydroxyethylthiazole kinase from Gemmatimonas aurantiaca (strain DSM 14586 / JCM 11422 / NBRC 100505 / T-27).